The sequence spans 213 residues: Methylthioribulose-1-phosphate dehydratase (213 aa).

His97 and His99 together coordinate Zn(2+).

This sequence belongs to the aldolase class II family. MtnB subfamily. In terms of assembly, homotetramer. Zn(2+) is required as a cofactor.

The enzyme catalyses 5-(methylsulfanyl)-D-ribulose 1-phosphate = 5-methylsulfanyl-2,3-dioxopentyl phosphate + H2O. It participates in amino-acid biosynthesis; L-methionine biosynthesis via salvage pathway; L-methionine from S-methyl-5-thio-alpha-D-ribose 1-phosphate: step 2/6. Functionally, catalyzes the dehydration of methylthioribulose-1-phosphate (MTRu-1-P) into 2,3-diketo-5-methylthiopentyl-1-phosphate (DK-MTP-1-P). In Geobacillus sp. (strain WCH70), this protein is Methylthioribulose-1-phosphate dehydratase.